We begin with the raw amino-acid sequence, 244 residues long: uncharacterized protein (244 aa).

Positions 30-49 are disordered; the sequence is RETNESPKSQNPSEEATTVN. A compositionally biased stretch (polar residues) spans 35-49; it reads SPKSQNPSEEATTVN. The next 4 helical transmembrane spans lie at 96–116, 128–148, 171–191, and 194–214; these read LWGT…LSNS, LLFI…FGLF, GFFI…TIAF, and FVTI…HPLS. The disordered stretch occupies residues 224 to 244; that stretch reads QLDGSGERKTDSSLVHQNPPN. A compositionally biased stretch (polar residues) spans 235–244; sequence SSLVHQNPPN.

It localises to the nucleus membrane. This is an uncharacterized protein from Schizosaccharomyces pombe (strain 972 / ATCC 24843) (Fission yeast).